A 346-amino-acid polypeptide reads, in one-letter code: Ornithine carbamoyltransferase, catabolic (346 aa).

Residues 58–61 (STRT), Asn85, Arg109, and 136–139 (HPTQ) contribute to the carbamoyl phosphate site. Residues Asn168, Asp239, and 243 to 244 (SL) each bind L-ornithine. Carbamoyl phosphate is bound by residues 280-281 (CL) and Arg332.

The protein belongs to the aspartate/ornithine carbamoyltransferase superfamily. OTCase family.

It is found in the cytoplasm. It catalyses the reaction carbamoyl phosphate + L-ornithine = L-citrulline + phosphate + H(+). It functions in the pathway amino-acid degradation; L-arginine degradation via ADI pathway; carbamoyl phosphate from L-arginine: step 2/2. In terms of biological role, reversibly catalyzes the transfer of the carbamoyl group from carbamoyl phosphate (CP) to the N(epsilon) atom of ornithine (ORN) to produce L-citrulline. This Mycoplasma pneumoniae (strain ATCC 29342 / M129 / Subtype 1) (Mycoplasmoides pneumoniae) protein is Ornithine carbamoyltransferase, catabolic.